The primary structure comprises 453 residues: Venom prothrombin activator notecarin-D2 (453 aa).

The signal sequence occupies residues 1 to 20 (MAPQLLLCLILTFLWSLPEA). The propeptide occupies 21-40 (ESNVFLKSKVANRFLQRTKR). The region spanning 41–86 (SNSLFEEIRPGNIERECIEEKCSKEEAREVFEDNEKTETFWNVYVD) is the Gla domain. 4-carboxyglutamate is present on residues Glu-46, Glu-47, Glu-54, Glu-56, Glu-59, Glu-60, Glu-65, Glu-66, Glu-69, Glu-72, and Glu-75. The cysteines at positions 57 and 62 are disulfide-linked. The EGF-like 1; calcium-binding domain occupies 86 to 122 (DGDQCSSNPCHYRGTCKDGIGSYTCTCLPNYEGKNCE). 11 disulfides stabilise this stretch: Cys-90–Cys-101, Cys-95–Cys-110, Cys-112–Cys-121, Cys-129–Cys-140, Cys-136–Cys-149, Cys-151–Cys-164, Cys-172–Cys-326, Cys-216–Cys-221, Cys-236–Cys-252, Cys-374–Cys-388, and Cys-399–Cys-427. The O-linked (Hex...) serine glycan is linked to Ser-92. Residues 129 to 164 (CRAFNGNCWHFCKRVQSETQCSCAESYLLGVDGHSC) enclose the EGF-like 2 domain. The propeptide at 182-209 (REASLPDFVQSQKATVLKKSDNPSPDIR) is activation peptide. Residues 210–451 (IVNGMDCKLG…FIPWIKKIMS (242 aa)) form the Peptidase S1 domain. The active-site Charge relay system is the His-251. Asn-254 carries N-linked (GlcNAc...) asparagine glycosylation. Asp-306 acts as the Charge relay system in catalysis. Catalysis depends on Ser-403, which acts as the Charge relay system.

It belongs to the peptidase S1 family. Snake venom subfamily. As to quaternary structure, heterodimer of a light chain and a heavy chain; disulfide-linked. In terms of processing, gamma-carboxyglutamate residues are formed by vitamin K dependent carboxylation. These residues are essential for the binding of calcium. Expressed by the venom gland.

It localises to the secreted. The enzyme catalyses Selective cleavage of Arg-|-Thr and then Arg-|-Ile bonds in prothrombin to form thrombin.. In terms of biological role, snake prothrombin activator that attacks the hemostatic system of prey. This protein is functionally similar to blood coagulation factor Xa. In Notechis scutatus scutatus (Mainland tiger snake), this protein is Venom prothrombin activator notecarin-D2.